The chain runs to 393 residues: Bifunctional enzyme Fae/Hps (393 aa).

Residues 1–161 (MYLIGEALVG…HEKDRAAHAV (161 aa)) form a formaldehyde-activating enzyme region. The active-site Proton donor is His-17. Substrate contacts are provided by Asp-19, Leu-48, Lys-66, Thr-68, and Gln-83. Positions 162 to 393 (MGFKVQRLWD…IDQFRIMTDF (232 aa)) are 3-hexulose-6-phosphate synthase.

The protein in the N-terminal section; belongs to the formaldehyde-activating enzyme family. It in the C-terminal section; belongs to the HPS/KGPDC family. HPS subfamily.

The catalysed reaction is 5,6,7,8-tetrahydromethanopterin + formaldehyde = 5,10-methylenetetrahydromethanopterin + H2O. It catalyses the reaction D-ribulose 5-phosphate + formaldehyde = D-arabino-hex-3-ulose 6-phosphate. It participates in carbohydrate biosynthesis; D-ribose 5-phosphate biosynthesis. Functionally, catalyzes the condensation of formaldehyde with tetrahydromethanopterin (H(4)MPT) to 5,10-methylenetetrahydromethanopterin. In terms of biological role, catalyzes the reversible formation of ribulose-5-phosphate and formaldehyde from 3-hexulose-6-phosphate. The protein is Bifunctional enzyme Fae/Hps of Methanoculleus marisnigri (strain ATCC 35101 / DSM 1498 / JR1).